Here is a 365-residue protein sequence, read N- to C-terminus: NAD(P)H-quinone oxidoreductase subunit 1, chloroplastic (365 aa).

Helical transmembrane passes span 30–50 (LVPI…IVWL), 104–124 (IAVI…HFVL), 129–149 (IGVF…LMSG), 253–273 (FGLF…FVAV), 302–322 (VFGT…FLFI), and 338–358 (LLNL…LLTT).

This sequence belongs to the complex I subunit 1 family. In terms of assembly, NDH is composed of at least 16 different subunits, 5 of which are encoded in the nucleus.

The protein resides in the plastid. It localises to the chloroplast thylakoid membrane. The catalysed reaction is a plastoquinone + NADH + (n+1) H(+)(in) = a plastoquinol + NAD(+) + n H(+)(out). It carries out the reaction a plastoquinone + NADPH + (n+1) H(+)(in) = a plastoquinol + NADP(+) + n H(+)(out). Its function is as follows. NDH shuttles electrons from NAD(P)H:plastoquinone, via FMN and iron-sulfur (Fe-S) centers, to quinones in the photosynthetic chain and possibly in a chloroplast respiratory chain. The immediate electron acceptor for the enzyme in this species is believed to be plastoquinone. Couples the redox reaction to proton translocation, and thus conserves the redox energy in a proton gradient. This chain is NAD(P)H-quinone oxidoreductase subunit 1, chloroplastic, found in Populus trichocarpa (Western balsam poplar).